Reading from the N-terminus, the 188-residue chain is MVKRGLFVGRFQPVHNGHIKALEFVFSQVDEVIIGIGSAQASHTLKNPFTTSERMEMLIRALEEAELTEKRYYLIPLPDINFNAIWATYVVSMVPRFDVVFTGNSLVAQLFREKGYEVIVQPMFRKDILSATEIRRRMVEGEPWEELVPRSVAEFIREIKGVERIKMLATNLESSEKELQAPIRIPEF.

It belongs to the archaeal NMN adenylyltransferase family.

Its subcellular location is the cytoplasm. The catalysed reaction is beta-nicotinamide D-ribonucleotide + ATP + H(+) = diphosphate + NAD(+). The protein operates within cofactor biosynthesis; NAD(+) biosynthesis; NAD(+) from nicotinamide D-ribonucleotide: step 1/1. In Thermococcus kodakarensis (strain ATCC BAA-918 / JCM 12380 / KOD1) (Pyrococcus kodakaraensis (strain KOD1)), this protein is Nicotinamide-nucleotide adenylyltransferase.